A 1464-amino-acid polypeptide reads, in one-letter code: Glutamate receptor ionotropic, NMDA 2A (1464 aa).

The first 22 residues, 1 to 22 (MGRVGYWTLLVLPALLVWRGPA), serve as a signal peptide directing secretion. The Extracellular portion of the chain corresponds to 23–556 (PSAAAEKGPP…SAFLEPFSAS (534 aa)). H44 contributes to the Zn(2+) binding site. N75 is a glycosylation site (N-linked (GlcNAc...) asparagine). Cysteines 87 and 320 form a disulfide. Zn(2+) is bound by residues H128, E266, and D282. N-linked (GlcNAc...) asparagine glycans are attached at residues N340, N380, N443, and N444. Intrachain disulfides connect C429/C455 and C436/C456. 3 residues coordinate L-glutamate: S511, T513, and R518. Residue N541 is glycosylated (N-linked (GlcNAc...) asparagine). Residues 557–576 (VWVMMFVMLLIVSAIAVFVF) traverse the membrane as a helical segment. Residues 577–600 (EYFSPVGYNRNLAKGKAPHGPSFT) are Cytoplasmic-facing. Positions 599 to 620 (FTIGKAIWLLWGLVFNNSVPVQ) are pore-forming. The discontinuously helical intramembrane region spans 601–615 (IGKAIWLLWGLVFNN). Residues 616–625 (SVPVQNPKGT) lie on the Cytoplasmic side of the membrane. Residues 626–646 (TSKIMVSVWAFFAVIFLASYT) traverse the membrane as a helical segment. The Extracellular segment spans residues 647–814 (ANLAAFMIQE…NEVMSSQLDI (168 aa)). A glycan (N-linked (GlcNAc...) asparagine) is linked at N687. Residues S689, T690, and D731 each coordinate L-glutamate. C745 and C800 form a disulfide bridge. A helical membrane pass occupies residues 815–835 (DNMAGVFYMLAAAMALSLITF). Over 836 to 1464 (IWEHLFYWKL…KKMPSIESDV (629 aa)) the chain is Cytoplasmic. 3 positions are modified to phosphoserine: S882, S890, and S929. Composition is skewed to polar residues over residues 997-1010 (EVAV…NSRP) and 1023-1032 (QDSLSQNPVS). The disordered stretch occupies residues 997–1083 (EVAVSTESKA…PDNSKNHKTK (87 aa)). S1025 is modified (phosphoserine). Composition is skewed to basic and acidic residues over residues 1033-1043 (QRDEATAENRT) and 1052-1061 (LPEEMAHSDI). A phosphoserine mark is found at S1059 and S1062. A compositionally biased stretch (basic and acidic residues) spans 1070-1083 (CHREPDNSKNHKTK). Residues S1198 and S1291 each carry the phosphoserine modification. The interval 1335–1372 (KLSGKKSSLFPQGLEDSKRSKSLLPDHTSDNPFLHSHR) is disordered. The PDZ-binding signature appears at 1462–1464 (SDV).

This sequence belongs to the glutamate-gated ion channel (TC 1.A.10.1) family. NR2A/GRIN2A subfamily. As to quaternary structure, heterotetramer. Forms heterotetrameric channels composed of two GluN1/zeta subunits (GRIN1), and two identical GluN2/epsilon subunits (GRIN2A, GRIN2B, GRIN2C or GRIN2D) or GluN3 subunits (GRIN3A or GRIN3B) (in vitro). Can also form heterotetrameric channels that contain at least two GluN1 subunits and at least two different GluN2 subunits (or a combination of one GluN2 and one GluN3 subunits) (in vitro). In vivo, the subunit composition may depend on the expression levels of the different subunits. Found in a complex with GRIN1, GRIN3A and PPP2CB. Found in a complex with GRIN1 and GRIN3B. Interacts with AIP1. Interacts with HIP1 and NETO1. Interacts with SNX27 (via PDZ domain); the interaction is required for recycling to the plasma membrane when endocytosed and prevent degradation in lysosomes. Interacts with PDZ domains of PATJ and DLG4. Interacts with LRFN2. Interacts with RPH3A and DLG4; this ternary complex regulates NMDA receptor composition at postsynaptic membranes. Interacts with SORCS2. Interacts with ARC; preventing ARC oligomerization. Interacts (via the extreme C-terminus) with FRMPD2 (the second PDZ domain); the interaction is direct and is likely to promote NMDAR-mediated neural signal transmission. GRIN2A binds FRMPD2 with lower affinity than GRIN2B.

The protein resides in the cell projection. It is found in the dendritic spine. The protein localises to the cell membrane. Its subcellular location is the synapse. It localises to the postsynaptic cell membrane. The protein resides in the cytoplasmic vesicle membrane. It carries out the reaction Ca(2+)(in) = Ca(2+)(out). It catalyses the reaction Na(+)(in) = Na(+)(out). The enzyme catalyses K(+)(in) = K(+)(out). Its activity is regulated as follows. NMDA glutamate receptor activity is inhibited by endogenous Mg(2+) in a voltage-dependent manner. NMDA glutamate receptor activity is inhibited by endogenous Zn(2+). NMDA glutamate receptor activity is inhibited by endogenous protons. Its function is as follows. Component of N-methyl-D-aspartate (NMDA) receptors (NMDARs) that function as heterotetrameric, ligand-gated cation channels with high calcium permeability and voltage-dependent block by Mg(2+). NMDARs participate in synaptic plasticity for learning and memory formation by contributing to the slow phase of excitatory postsynaptic current, long-term synaptic potentiation, and learning. Channel activation requires binding of the neurotransmitter L-glutamate to the GluN2 subunit, glycine or D-serine binding to the GluN1 subunit, plus membrane depolarization to eliminate channel inhibition by Mg(2+). NMDARs mediate simultaneously the potasium efflux and the influx of calcium and sodium. Each GluN2 subunit confers differential attributes to channel properties, including activation, deactivation and desensitization kinetics, pH sensitivity, Ca2(+) permeability, and binding to allosteric modulators. Participates in the synaptic plasticity regulation through activation by the L-glutamate releaseed by BEST1, into the synaptic cleft, upon F2R/PAR-1 activation in astrocyte. The chain is Glutamate receptor ionotropic, NMDA 2A from Homo sapiens (Human).